We begin with the raw amino-acid sequence, 272 residues long: uncharacterized protein (272 aa).

The active-site Schiff-base intermediate with substrate is Lys185.

The protein belongs to the DeoC/FbaB aldolase family.

This is an uncharacterized protein from Saccharolobus solfataricus (strain ATCC 35092 / DSM 1617 / JCM 11322 / P2) (Sulfolobus solfataricus).